A 253-amino-acid chain; its full sequence is uncharacterized protein (253 aa).

A signal peptide spans 1–16 (MCVVYRTSVLILLASG). Residue cysteine 17 is the site of N-palmitoyl cysteine attachment. Cysteine 17 carries S-diacylglycerol cysteine lipidation.

Belongs to the staphylococcal tandem lipoprotein family.

It localises to the cell membrane. This is an uncharacterized protein from Staphylococcus aureus (strain N315).